We begin with the raw amino-acid sequence, 495 residues long: Probable cytosol aminopeptidase (495 aa).

Residues K258 and D263 each coordinate Mn(2+). The active site involves K270. Mn(2+) is bound by residues D281, D340, and E342. R344 is an active-site residue.

The protein belongs to the peptidase M17 family. Mn(2+) is required as a cofactor.

It localises to the cytoplasm. The enzyme catalyses Release of an N-terminal amino acid, Xaa-|-Yaa-, in which Xaa is preferably Leu, but may be other amino acids including Pro although not Arg or Lys, and Yaa may be Pro. Amino acid amides and methyl esters are also readily hydrolyzed, but rates on arylamides are exceedingly low.. It carries out the reaction Release of an N-terminal amino acid, preferentially leucine, but not glutamic or aspartic acids.. Functionally, presumably involved in the processing and regular turnover of intracellular proteins. Catalyzes the removal of unsubstituted N-terminal amino acids from various peptides. The sequence is that of Probable cytosol aminopeptidase from Leptospira interrogans serogroup Icterohaemorrhagiae serovar Lai (strain 56601).